Here is a 157-residue protein sequence, read N- to C-terminus: Trafficking protein particle complex subunit 6b (157 aa).

This sequence belongs to the TRAPP small subunits family. BET3 subfamily. In terms of assembly, homodimer. Part of a TRAPP complex.

It is found in the golgi apparatus. Its subcellular location is the cis-Golgi network. The protein resides in the endoplasmic reticulum. In terms of biological role, component of a transport protein particle (TRAPP) complex that may function in specific stages of inter-organelle traffic. Specifically involved in the early development of neural circuitry, likely by controlling the frequency and amplitude of intracellular calcium transients implicated in the regulation of neuron differentiation and survival. This Danio rerio (Zebrafish) protein is Trafficking protein particle complex subunit 6b.